A 568-amino-acid chain; its full sequence is Probable pectinesterase/pectinesterase inhibitor 23 (568 aa).

The signal sequence occupies residues 1–33 (MGSDGDKKKKFIVAGSVSGFLVIMVVSVAVVTS). The pectinesterase inhibitor 23 stretch occupies residues 45 to 198 (RKTTKAVQAV…RELSSNSLAM (154 aa)). Residues asparagine 94, asparagine 210, and asparagine 316 are each glycosylated (N-linked (GlcNAc...) asparagine). The pectinesterase 23 stretch occupies residues 251–548 (PGPVKANAVV…PQDALLYTGD (298 aa)). Substrate contacts are provided by threonine 333 and glutamine 363. The active-site Proton donor; for pectinesterase activity is the aspartate 386. A disulfide bridge links cysteine 400 with cysteine 420. Aspartate 407 (nucleophile; for pectinesterase activity) is an active-site residue. 2 residues coordinate substrate: arginine 475 and tryptophan 477.

The protein in the N-terminal section; belongs to the PMEI family. In the C-terminal section; belongs to the pectinesterase family. As to expression, expressed in mature pollen grains in the anthers and on the stigma. Found in pollen tubes within the style.

The protein resides in the secreted. It localises to the cell wall. It carries out the reaction [(1-&gt;4)-alpha-D-galacturonosyl methyl ester](n) + n H2O = [(1-&gt;4)-alpha-D-galacturonosyl](n) + n methanol + n H(+). It participates in glycan metabolism; pectin degradation; 2-dehydro-3-deoxy-D-gluconate from pectin: step 1/5. Its function is as follows. Acts in the modification of cell walls via demethylesterification of cell wall pectin. This is Probable pectinesterase/pectinesterase inhibitor 23 (PME23) from Arabidopsis thaliana (Mouse-ear cress).